The primary structure comprises 360 residues: MLIHVIIFMIITTMQFSTTCHAYVINVTNVNVSMFPAILVFGDSTIDTGNNNYIKTYIRANFPPYGCNFPGHNATGRFSNGKLIPDFIASLMGIKDTVPPFLDPHLSDSDIITGVCFASAGSGYDNLTDRATSTLSVDKQADMLRSYVERLSQIVGDEKAASIVSEALVIVSSGTNDFNLNLYDTPSRRQKLGVDGYQSFILSNVHNFVQELYDIGCRKIMVLGLPPVGCLPIQMTMAMQKQNERRCIDKQNSDSQEFNQKLKNSLTEMQSNLTGSVIFYGDIYGALFDMATNPQRYGLKETTRGCCGTGEIELAYLCNALTRICPNPNQYLFWDDIHPSQIAYIVISLSLVEQIFHVLS.

The first 22 residues, 1–22, serve as a signal peptide directing secretion; it reads MLIHVIIFMIITTMQFSTTCHA. 2 N-linked (GlcNAc...) asparagine glycosylation sites follow: Asn-26 and Asn-31. Catalysis depends on Ser-44, which acts as the Nucleophile. N-linked (GlcNAc...) asparagine glycans are attached at residues Asn-73, Asn-126, and Asn-272. Catalysis depends on residues Asp-335 and His-338.

Belongs to the 'GDSL' lipolytic enzyme family.

It localises to the secreted. This Arabidopsis thaliana (Mouse-ear cress) protein is GDSL esterase/lipase At1g06990.